The primary structure comprises 370 residues: 3-dehydroquinate synthase (370 aa).

NAD(+) is bound by residues 112 to 116 (GVIGD), 136 to 137 (TT), Lys-149, Lys-158, and 176 to 179 (TLAT). Zn(2+)-binding residues include Glu-191, His-254, and His-276.

Belongs to the sugar phosphate cyclases superfamily. Dehydroquinate synthase family. Co(2+) serves as cofactor. Requires Zn(2+) as cofactor. It depends on NAD(+) as a cofactor.

It localises to the cytoplasm. It catalyses the reaction 7-phospho-2-dehydro-3-deoxy-D-arabino-heptonate = 3-dehydroquinate + phosphate. The protein operates within metabolic intermediate biosynthesis; chorismate biosynthesis; chorismate from D-erythrose 4-phosphate and phosphoenolpyruvate: step 2/7. Catalyzes the conversion of 3-deoxy-D-arabino-heptulosonate 7-phosphate (DAHP) to dehydroquinate (DHQ). The protein is 3-dehydroquinate synthase of Xylella fastidiosa (strain M12).